The sequence spans 418 residues: Gamma-glutamyl phosphate reductase (418 aa).

It belongs to the gamma-glutamyl phosphate reductase family.

It is found in the cytoplasm. It carries out the reaction L-glutamate 5-semialdehyde + phosphate + NADP(+) = L-glutamyl 5-phosphate + NADPH + H(+). It participates in amino-acid biosynthesis; L-proline biosynthesis; L-glutamate 5-semialdehyde from L-glutamate: step 2/2. In terms of biological role, catalyzes the NADPH-dependent reduction of L-glutamate 5-phosphate into L-glutamate 5-semialdehyde and phosphate. The product spontaneously undergoes cyclization to form 1-pyrroline-5-carboxylate. This chain is Gamma-glutamyl phosphate reductase, found in Chlorobium limicola (strain DSM 245 / NBRC 103803 / 6330).